Consider the following 446-residue polypeptide: N-succinylarginine dihydrolase (446 aa).

Residues 19 to 28 (AGLSFGNVAS), Asn110, and 137 to 138 (HR) each bind substrate. The active site involves Glu174. Arg213 is a binding site for substrate. The active site involves His249. Residues Asp251 and Asn364 each coordinate substrate. Cys370 functions as the Nucleophile in the catalytic mechanism.

Belongs to the succinylarginine dihydrolase family. In terms of assembly, homodimer.

The enzyme catalyses N(2)-succinyl-L-arginine + 2 H2O + 2 H(+) = N(2)-succinyl-L-ornithine + 2 NH4(+) + CO2. It functions in the pathway amino-acid degradation; L-arginine degradation via AST pathway; L-glutamate and succinate from L-arginine: step 2/5. Catalyzes the hydrolysis of N(2)-succinylarginine into N(2)-succinylornithine, ammonia and CO(2). The sequence is that of N-succinylarginine dihydrolase from Burkholderia multivorans (strain ATCC 17616 / 249).